Consider the following 173-residue polypeptide: Placenta-specific protein 1 (173 aa).

Positions 1-23 are cleaved as a signal peptide; sequence MKLIKFLGGVVFFTLMFSGYSEQ.

This sequence belongs to the PLAC1 family.

The protein resides in the secreted. Functionally, may play a role in placental development. This chain is Placenta-specific protein 1, found in Rattus norvegicus (Rat).